A 358-amino-acid chain; its full sequence is Phosphoserine aminotransferase (358 aa).

Position 41 (Arg-41) interacts with L-glutamate. Pyridoxal 5'-phosphate contacts are provided by residues 75-76, Trp-100, Thr-148, Asp-167, and Gln-190; that span reads AS. Lys-191 carries the N6-(pyridoxal phosphate)lysine modification. 233 to 234 contacts pyridoxal 5'-phosphate; it reads NT.

Belongs to the class-V pyridoxal-phosphate-dependent aminotransferase family. SerC subfamily. As to quaternary structure, homodimer. Requires pyridoxal 5'-phosphate as cofactor.

The protein localises to the cytoplasm. The enzyme catalyses O-phospho-L-serine + 2-oxoglutarate = 3-phosphooxypyruvate + L-glutamate. It carries out the reaction 4-(phosphooxy)-L-threonine + 2-oxoglutarate = (R)-3-hydroxy-2-oxo-4-phosphooxybutanoate + L-glutamate. It participates in amino-acid biosynthesis; L-serine biosynthesis; L-serine from 3-phospho-D-glycerate: step 2/3. The protein operates within cofactor biosynthesis; pyridoxine 5'-phosphate biosynthesis; pyridoxine 5'-phosphate from D-erythrose 4-phosphate: step 3/5. Catalyzes the reversible conversion of 3-phosphohydroxypyruvate to phosphoserine and of 3-hydroxy-2-oxo-4-phosphonooxybutanoate to phosphohydroxythreonine. The polypeptide is Phosphoserine aminotransferase (Campylobacter jejuni subsp. jejuni serotype O:2 (strain ATCC 700819 / NCTC 11168)).